A 438-amino-acid polypeptide reads, in one-letter code: Putative ZDHHC-type palmitoyltransferase 7 (438 aa).

2 N-linked (GlcNAc...) asparagine glycosylation sites follow: Asn-12 and Asn-13. Transmembrane regions (helical) follow at residues 48-68 (IFCLVHFIVYCVIIFRKGTIL) and 77-97 (YFYLIWTHCVFFFAIGTYFLI). Asn-119, Asn-144, and Asn-157 each carry an N-linked (GlcNAc...) asparagine glycan. Residues 183–239 (EDSINDDTITTTTTTTTTTSTSTIPEISNDDDDNNNENNNDNVNNRNNNNSNGEKED) are disordered. Composition is skewed to low complexity over residues 190-206 (TITTTTTTTTTTSTSTI) and 218-234 (NENNNDNVNNRNNNNSN). Asn-231 carries N-linked (GlcNAc...) asparagine glycosylation. The DHHC domain occupies 249–299 (YFCKKCLVDIPLRTKHCVKCNRCVLKYDHHCVFIGGCVGLNNHKNFLLFLL). 2 helical membrane passes run 294–314 (FLLFLLAESLLLLLGLRIIVT) and 330–350 (IAIIPPTLLIFGGLCMPFALF). Asn-360 carries N-linked (GlcNAc...) asparagine glycosylation.

Belongs to the DHHC palmitoyltransferase family.

It localises to the membrane. It catalyses the reaction L-cysteinyl-[protein] + hexadecanoyl-CoA = S-hexadecanoyl-L-cysteinyl-[protein] + CoA. This Dictyostelium discoideum (Social amoeba) protein is Putative ZDHHC-type palmitoyltransferase 7.